Here is a 407-residue protein sequence, read N- to C-terminus: Multifunctional CCA protein (407 aa).

ATP contacts are provided by Gly8 and Arg11. The CTP site is built by Gly8 and Arg11. Mg(2+)-binding residues include Asp21 and Asp23. ATP-binding residues include Arg91, Arg137, and Arg140. CTP-binding residues include Arg91, Arg137, and Arg140. Residues 226 to 327 (TGIHVMAVVD…VKLLERTDAL (102 aa)) form the HD domain.

Belongs to the tRNA nucleotidyltransferase/poly(A) polymerase family. Bacterial CCA-adding enzyme type 1 subfamily. Monomer. Can also form homodimers and oligomers. Mg(2+) is required as a cofactor. It depends on Ni(2+) as a cofactor.

It carries out the reaction a tRNA precursor + 2 CTP + ATP = a tRNA with a 3' CCA end + 3 diphosphate. It catalyses the reaction a tRNA with a 3' CCA end + 2 CTP + ATP = a tRNA with a 3' CCACCA end + 3 diphosphate. Functionally, catalyzes the addition and repair of the essential 3'-terminal CCA sequence in tRNAs without using a nucleic acid template. Adds these three nucleotides in the order of C, C, and A to the tRNA nucleotide-73, using CTP and ATP as substrates and producing inorganic pyrophosphate. tRNA 3'-terminal CCA addition is required both for tRNA processing and repair. Also involved in tRNA surveillance by mediating tandem CCA addition to generate a CCACCA at the 3' terminus of unstable tRNAs. While stable tRNAs receive only 3'-terminal CCA, unstable tRNAs are marked with CCACCA and rapidly degraded. This chain is Multifunctional CCA protein, found in Aromatoleum aromaticum (strain DSM 19018 / LMG 30748 / EbN1) (Azoarcus sp. (strain EbN1)).